The chain runs to 797 residues: Protocadherin-3 (797 aa).

Positions 1-30 (METALAKIPQQRQVFFLTILSLLWKSSSEA) are cleaved as a signal peptide. Residues 31-691 (IRYSMPEETE…DNYDVLTLYL (661 aa)) lie on the Extracellular side of the membrane. Cadherin domains follow at residues 35–133 (MPEE…SPEF), 138–242 (MLLT…SPQF), 247–346 (YKVQ…APEL), 351–450 (LTVL…APAF), and 455–560 (YTMF…APFV). N-linked (GlcNAc...) asparagine glycosylation is found at Asn-169, Asn-276, and Asn-417. Asn-566 carries N-linked (GlcNAc...) asparagine glycosylation. One can recognise a Cadherin 6 domain in the interval 567–670 (ASAPCTELLP…VVDGFSQPYL (104 aa)). A helical membrane pass occupies residues 692–712 (VIALASVSSLFLLSVVLFVGV). At 713-797 (RLCRRAREAS…AVVHNSVGFY (85 aa)) the chain is on the cytoplasmic side.

As to expression, expressed in brain.

Its subcellular location is the cell membrane. Functionally, potential calcium-dependent cell-adhesion protein. May be involved in the establishment and maintenance of specific neuronal connections in the brain. This chain is Protocadherin-3 (Pcdh3), found in Rattus norvegicus (Rat).